We begin with the raw amino-acid sequence, 159 residues long: Transmembrane protein 88 (159 aa).

The next 2 helical transmembrane spans lie at 43-63 (LLLL…MLGF) and 88-108 (FTAL…LALA). Residues 137–159 (PQPRQIRASPGSQAVPTSGKVWV) are disordered.

This sequence belongs to the TMEM88 family. Interacts (via C-terminus) with DVL1.

The protein localises to the cell membrane. Its function is as follows. Inhibits the Wnt/beta-catenin signaling pathway. Crucial for heart development and acts downstream of GATA factors in the pre-cardiac mesoderm to specify lineage commitment of cardiomyocyte development. The sequence is that of Transmembrane protein 88 (TMEM88) from Homo sapiens (Human).